We begin with the raw amino-acid sequence, 533 residues long: AAA-ATPase At5g17740 (533 aa).

Residues 11–27 traverse the membrane as a helical segment; that stretch reads ASMFSTYASMMGYVMII. 252–259 serves as a coordination point for ATP; that stretch reads GPPGTGKS.

The protein belongs to the AAA ATPase family. BCS1 subfamily. It depends on Mg(2+) as a cofactor.

Its subcellular location is the membrane. It carries out the reaction ATP + H2O = ADP + phosphate + H(+). The sequence is that of AAA-ATPase At5g17740 from Arabidopsis thaliana (Mouse-ear cress).